Reading from the N-terminus, the 57-residue chain is Large ribosomal subunit protein bL32 (57 aa).

The segment at Met-1–Asp-20 is disordered. A compositionally biased stretch (basic residues) spans Arg-7–His-19.

Belongs to the bacterial ribosomal protein bL32 family.

This Ureaplasma urealyticum serovar 10 (strain ATCC 33699 / Western) protein is Large ribosomal subunit protein bL32.